The sequence spans 238 residues: Peptidyl-tRNA hydrolase (238 aa).

Tyr-14 is a tRNA binding site. Residue His-19 is the Proton acceptor of the active site. Positions 64, 66, and 112 each coordinate tRNA. Positions 202–225 (PAAQSHIHQARNSAQPKKLPETGP) are disordered. Residues 207 to 216 (HIHQARNSAQ) show a composition bias toward polar residues.

The protein belongs to the PTH family. In terms of assembly, monomer.

The protein resides in the cytoplasm. The catalysed reaction is an N-acyl-L-alpha-aminoacyl-tRNA + H2O = an N-acyl-L-amino acid + a tRNA + H(+). Hydrolyzes ribosome-free peptidyl-tRNAs (with 1 or more amino acids incorporated), which drop off the ribosome during protein synthesis, or as a result of ribosome stalling. Its function is as follows. Catalyzes the release of premature peptidyl moieties from peptidyl-tRNA molecules trapped in stalled 50S ribosomal subunits, and thus maintains levels of free tRNAs and 50S ribosomes. This is Peptidyl-tRNA hydrolase from Agrobacterium fabrum (strain C58 / ATCC 33970) (Agrobacterium tumefaciens (strain C58)).